Here is a 185-residue protein sequence, read N- to C-terminus: Calcium-binding protein CML37 (185 aa).

Over residues 1 to 12 (MTLAKNQKSSLS) the composition is skewed to polar residues. The tract at residues 1-45 (MTLAKNQKSSLSRLYKKVSSKRSESSRNLEDESRTSSNSSGSSSL) is disordered. Residues 21–34 (KRSESSRNLEDESR) are compositionally biased toward basic and acidic residues. Positions 35-44 (TSSNSSGSSS) are enriched in low complexity. EF-hand domains are found at residues 45–80 (LNVN…LGGA), 81–116 (LSSR…EDGS), 119–154 (ERRK…LGES), and 155–185 (CTVD…LMMR). 9 residues coordinate Ca(2+): Asp58, Asn60, Asp62, Lys64, Glu69, Asp94, Asp96, Asp98, and Glu105. Ca(2+) contacts are provided by Asp168, Asn170, Asp172, and Glu179.

In terms of assembly, binds to ABCG36. In terms of tissue distribution, expressed in cotyledons, stipule, young leaves and at the hypocotyl-root junction. In mature root, expressed in the stele, cortex, emerging lateral root, root tip and root cap. In mature plant, expressed at the base of cauline and floral branches, and in rosette and cauline leaves. Expressed from stage 9 to 14 of flower development in anthers. At stage 15, expressed in carpel, sepals, petals and pollen until dehiscence. Expressed in developing seeds and young siliques.

In terms of biological role, potential calcium sensor that binds calcium in vitro. This Arabidopsis thaliana (Mouse-ear cress) protein is Calcium-binding protein CML37.